The following is a 294-amino-acid chain: Probable ABC transporter permease protein YqgI (294 aa).

Transmembrane regions (helical) follow at residues 14–34, 66–86, 99–121, 126–148, 190–210, and 260–280; these read FGLC…YIII, FYIL…GGVF, FIRT…FGLL, LTGW…LPVM, IITG…ALLF, and AIAN…NLAA. Residues 62–280 form the ABC transmembrane type-1 domain; the sequence is LFNSFYILFI…ISVLVFNLAA (219 aa).

This sequence belongs to the binding-protein-dependent transport system permease family. CysTW subfamily.

Its subcellular location is the cell membrane. In terms of biological role, part of the binding-protein-dependent transport system YqgGHIJK. Probably responsible for the translocation of the substrate across the membrane. The polypeptide is Probable ABC transporter permease protein YqgI (yqgI) (Bacillus subtilis (strain 168)).